A 177-amino-acid chain; its full sequence is Large ribosomal subunit protein bL9 (177 aa).

Belongs to the bacterial ribosomal protein bL9 family.

Functionally, binds to the 23S rRNA. The sequence is that of Large ribosomal subunit protein bL9 from Rhodopirellula baltica (strain DSM 10527 / NCIMB 13988 / SH1).